The chain runs to 517 residues: zeta-carotene-forming phytoene desaturase (517 aa).

11 to 44 provides a ligand contact to FAD; the sequence is VVVGAGVGGLAAAARLAHQGFDVQVFEKTQGPGG.

The protein belongs to the carotenoid/retinoid oxidoreductase family. The cofactor is FAD.

It carries out the reaction 15-cis-phytoene + 2 A = all-trans-zeta-carotene + 2 AH2. Its pathway is carotenoid biosynthesis; lycopene biosynthesis. Functionally, dehydrogenates carotenes in the cis conformation: has cis-to-trans isomerase activity and mediates dehydrogenation of cis-phytoene, producing zeta-carotene via the intermediary of phytofluene by the symmetrical introduction of 2 double bonds at the C-11 and C-11' positions of phytoene. The sequence is that of zeta-carotene-forming phytoene desaturase (carA2) from Myxococcus xanthus.